The following is a 237-amino-acid chain: Sugar fermentation stimulation protein homolog (237 aa).

This sequence belongs to the SfsA family.

The sequence is that of Sugar fermentation stimulation protein homolog from Pseudomonas putida (strain GB-1).